The primary structure comprises 354 residues: Thymidylate synthase (354 aa).

Residues Met-1–Gly-32 are disordered. Arg-53 is a binding site for dUMP. A Phosphoserine modification is found at Ser-117. Arg-178 to Arg-179 provides a ligand contact to dUMP. Catalysis depends on Cys-198, which acts as the Nucleophile. Residues Arg-218 to Asp-221, Asn-229, and His-259 to Tyr-261 contribute to the dUMP site. A (6R)-5,10-methylene-5,6,7,8-tetrahydrofolate-binding site is contributed by Asp-221. Residue Lys-349 forms a Glycyl lysine isopeptide (Lys-Gly) (interchain with G-Cter in SUMO2) linkage. Ala-353 provides a ligand contact to (6R)-5,10-methylene-5,6,7,8-tetrahydrofolate.

It belongs to the thymidylate synthase family. As to quaternary structure, homodimer.

It localises to the nucleus. The protein resides in the cytoplasm. Its subcellular location is the mitochondrion. It is found in the mitochondrion matrix. The protein localises to the mitochondrion inner membrane. The enzyme catalyses dUMP + (6R)-5,10-methylene-5,6,7,8-tetrahydrofolate = 7,8-dihydrofolate + dTMP. The protein operates within pyrimidine metabolism; dTTP biosynthesis. Catalyzes the reductive methylation of 2'-deoxyuridine 5'-monophosphate (dUMP) to thymidine 5'-monophosphate (dTMP), using the cosubstrate, 5,10- methylenetetrahydrofolate (CH2H4folate) as a 1-carbon donor and reductant and contributes to the de novo mitochondrial thymidylate biosynthesis pathway. The polypeptide is Thymidylate synthase (TYMS) (Bos taurus (Bovine)).